Here is a 564-residue protein sequence, read N- to C-terminus: Histone acetyltransferase rtt109 (564 aa).

Acetyl-CoA is bound by residues Phe-138, 157 to 159 (HVL), and Trp-167. Asp-261 acts as the Proton donor/acceptor in catalysis. Lys-263 is modified (N6-acetyllysine; by autocatalysis). Disordered stretches follow at residues 355-420 (YDKV…NAFY) and 506-549 (RKKD…ESPG). A compositionally biased stretch (low complexity) spans 366-377 (AVSVSTDSQSSD). Composition is skewed to polar residues over residues 394 to 417 (DPST…TDQN) and 512 to 521 (SQATTATSAQ). A compositionally biased stretch (low complexity) spans 529-544 (GTVSTAVTAEASTTGT).

Belongs to the RTT109 family.

Its subcellular location is the nucleus. The protein localises to the vacuole. It carries out the reaction L-lysyl-[protein] + acetyl-CoA = N(6)-acetyl-L-lysyl-[protein] + CoA + H(+). The catalysed reaction is L-lysyl-[histone] + acetyl-CoA = N(6)-acetyl-L-lysyl-[histone] + CoA + H(+). Functionally, histone chaperone-dependent acetylase that modifies 'Lys-56' of histone H3 (H3K56ac). Histone H3 'Lys-56' acetylation may be required for S-phase-linked DNA damage tolerance. Also acetylates 'Lys-9' of histone H3 (H3K9ac). Autoacetylates. The chain is Histone acetyltransferase rtt109 from Aspergillus flavus.